A 464-amino-acid polypeptide reads, in one-letter code: ESX-1 secretion system protein EccE1 (464 aa).

The next 2 helical transmembrane spans lie at 11-31 and 34-54; these read FTTG…AICM and DLLW…VLTI.

The protein belongs to the EccE family. As to quaternary structure, part of the ESX-1 / type VII secretion system (T7SS), which is composed of cytosolic and membrane components. The ESX-1 membrane complex is composed of EccB1, EccCa1, EccCb1, EccD1 and EccE1.

Its subcellular location is the cell inner membrane. Functionally, part of the ESX-1 / type VII specialized secretion system (T7SS), which exports several proteins including EsxA and EsxB. Plays a role in DNA conjugation, in at least a donor strain. The chain is ESX-1 secretion system protein EccE1 from Mycolicibacterium smegmatis (strain ATCC 700084 / mc(2)155) (Mycobacterium smegmatis).